The primary structure comprises 49 residues: Large ribosomal subunit protein bL33 (49 aa).

It belongs to the bacterial ribosomal protein bL33 family.

In Streptococcus pyogenes serotype M18 (strain MGAS8232), this protein is Large ribosomal subunit protein bL33.